Consider the following 307-residue polypeptide: Putative lipid kinase SERP0390 (307 aa).

A DAGKc domain is found at 3–139 (QPYNHGVLFY…YDVLKVNDLY (137 aa)). Residues Ser-44, 74–80 (GDGTLNE), and Thr-101 each bind ATP. The Mg(2+) site is built by Ser-220, Asp-223, and Arg-225. Glu-281 acts as the Proton acceptor in catalysis.

The protein belongs to the diacylglycerol/lipid kinase family. Mg(2+) serves as cofactor.

Its function is as follows. May catalyze the ATP-dependent phosphorylation of lipids other than diacylglycerol (DAG). This is Putative lipid kinase SERP0390 from Staphylococcus epidermidis (strain ATCC 35984 / DSM 28319 / BCRC 17069 / CCUG 31568 / BM 3577 / RP62A).